Consider the following 300-residue polypeptide: D-alanine--D-alanine ligase (300 aa).

The 195-residue stretch at 99–293 folds into the ATP-grasp domain; the sequence is KKILKYANIN…FAELLNSIVK (195 aa). 126–181 serves as a coordination point for ATP; the sequence is IEKIGYPVFVKPNSGGSSVATNLVKDKEGIKEAVELALKYDKEVMIENYTKGEEIT. Mg(2+)-binding residues include aspartate 248, glutamate 260, and asparagine 262.

The protein belongs to the D-alanine--D-alanine ligase family. The cofactor is Mg(2+). Requires Mn(2+) as cofactor.

It localises to the cytoplasm. The enzyme catalyses 2 D-alanine + ATP = D-alanyl-D-alanine + ADP + phosphate + H(+). The protein operates within cell wall biogenesis; peptidoglycan biosynthesis. Functionally, cell wall formation. This is D-alanine--D-alanine ligase from Clostridium botulinum (strain ATCC 19397 / Type A).